The following is a 199-amino-acid chain: Probable cobalt-precorrin-6B C(15)-methyltransferase (decarboxylating) (199 aa).

S-adenosyl-L-methionine is bound by residues threonine 24, glycine 48–glycine 52, aspartate 72, and alanine 101.

It belongs to the methyltransferase superfamily. Archaeal-type CbiT family.

It carries out the reaction Co-precorrin-6B + S-adenosyl-L-methionine = Co-precorrin-7 + S-adenosyl-L-homocysteine + CO2. It functions in the pathway cofactor biosynthesis; adenosylcobalamin biosynthesis; cob(II)yrinate a,c-diamide from sirohydrochlorin (anaerobic route): step 8/10. In terms of biological role, catalyzes the methylation of C-15 in cobalt-precorrin-6B followed by the decarboxylation of C-12 to form cobalt-precorrin-7. The chain is Probable cobalt-precorrin-6B C(15)-methyltransferase (decarboxylating) from Saccharolobus islandicus (strain L.S.2.15 / Lassen #1) (Sulfolobus islandicus).